Here is a 354-residue protein sequence, read N- to C-terminus: MMKKLLLVATLMAGAAQATAAEKLYLFNWNDYIAEDTLKRFEQQCGCELVQEFYSGTEEMMAKLAAGASGYDVIIPTQNAVEALIRKGDLLELDKSRLANLSNEAAGYLDKDFDKGNRYSLPYAFTTTLVGYNKTELDKLGIDPADWSVIFDPAVLEKIKGRVTVMDDPQELFGAALKYLGHSANDTDPQHWKEAQALILAAKPYWAAFNSSSYIKELTLGNIWVAHGYSSDMYQARADAEAAGRAFKVDFALPRQGAVLAIDNMVIHKGSKNPDLAYRFIDFMLDGRNASELTNQIGTGTPNAAALPFIKPEIKTLAALFPDATTQARLEPLKDLNSRQRRALNKLWTEIKLR.

The N-terminal stretch at Met-1–Ala-20 is a signal peptide.

It belongs to the bacterial solute-binding protein 1 family.

The protein localises to the periplasm. Binds putrescine and cadaverine. This Pseudomonas aeruginosa (strain ATCC 15692 / DSM 22644 / CIP 104116 / JCM 14847 / LMG 12228 / 1C / PRS 101 / PAO1) protein is Putrescine/cadaverine-binding protein.